We begin with the raw amino-acid sequence, 239 residues long: Cysteine-rich venom protein 2 (239 aa).

Positions 1–19 (MIALIVLPILAAVLQQSSG) are cleaved as a signal peptide. Residues 38 to 166 (VDLHNSLRRS…EYSYFYVCQY (129 aa)) enclose the SCP domain. Disulfide bonds link cysteine 75–cysteine 153, cysteine 92–cysteine 167, cysteine 148–cysteine 164, cysteine 186–cysteine 193, cysteine 189–cysteine 198, cysteine 202–cysteine 234, and cysteine 219–cysteine 232. The 37-residue stretch at 198 to 234 (CTNPCPKKISTQLPRFGPQAGCQDKQMQSDCSATCFC) folds into the ShKT domain.

It belongs to the CRISP family. In terms of tissue distribution, expressed by the venom gland.

It is found in the secreted. In terms of biological role, weakly blocks contraction of smooth muscle elicited by high potassium-induced depolarization, but does not block caffeine-stimulated contraction. May target voltage-gated calcium channels on smooth muscle. In Sistrurus catenatus edwardsii (Desert massasauga), this protein is Cysteine-rich venom protein 2.